The following is a 188-amino-acid chain: MDQLRQSLLDAPIIEKGDYEYFVHPISDGVPMLEPGLLREIVIKIIRKANLENVDKIVTPAAMGIHISTAVSLMTDIPLVVIRKREYGLDGEVSLHQQTGYSEGDMFINDVNEGDRVLVLDDVLSTGGTMKAVLDALDHIGADVVDTVAIIKKAGPNELDDSDHHVKTLINVTVEDGEVVIVDEHGDD.

This sequence belongs to the purine/pyrimidine phosphoribosyltransferase family. Archaeal HPRT subfamily.

Functionally, may catalyze a purine salvage reaction, the substrate is unknown. The protein is HGPRTase-like protein 1 of Haloferax volcanii (strain ATCC 29605 / DSM 3757 / JCM 8879 / NBRC 14742 / NCIMB 2012 / VKM B-1768 / DS2) (Halobacterium volcanii).